Consider the following 650-residue polypeptide: MKLLAITSCPNGIAHTYMAAENLQKAADRLGVSIKVETQGGIGVENKLTEEEIREADAIIIAADRSVNKDRFIGKKLLSVGVQDGIRKPEELIQKALNGDIPVYRSATKSESGNHQEKKQNPIYRHLMNGVSFMVPFIVVGGLLIAVALTLGGEKTPKGLVIPDDSFWKTIEQIGSASFSFMIPILAGYIAYSIADKPGLVPGMIGGYIAATGSFYDSASGAGFLGGIIAGFLAGYAALWIKKLKVPKAIQPIMPIIIIPVFASLIVGLAFVFLIGAPVAQIFASLTVWLAGMKGSSSILLALILGAMISFDMGGPVNKVAFLFGSAMIGEGNYEIMGPIAVAICIPPIGLGIATFLGKRKFEASQREMGKAAFTMGLFGITEGAIPFAAQDPLRVIPSIMAGSMTGSVIAMIGNVGDRVAHGGPIVAVLGAVDHVLMFFIAVIAGSLVTALFVNVLKKDITASPVLSETAPTSAPSEAAAANEIKQPIQSQKAEMSEFKKLTDIISPELIEPNLSGETSDDIIDELIQKLSRRGALLSESGFKQAILNREQQGTTAIGMNIAIPHGKSEAVREPSVAFGIKRSGVDWNSLDGSEAKLIFMIAVPKESGGNQHLKILQMLSRKLMDDNYRERLLSVQTTEEAYKLLEEIE.

The PTS EIIB type-2 domain occupies 1–98 (MKLLAITSCP…PEELIQKALN (98 aa)). C9 functions as the Phosphocysteine intermediate; for EIIB activity in the catalytic mechanism. A PTS EIIC type-2 domain is found at 123–456 (IYRHLMNGVS…SLVTALFVNV (334 aa)). 7 helical membrane passes run 133 to 153 (FMVP…TLGG), 174 to 194 (IGSA…AYSI), 199 to 219 (GLVP…YDSA), 221 to 241 (GAGF…ALWI), 256 to 276 (IIII…FLIG), 297 to 317 (SSIL…GGPV), and 336 to 356 (IMGP…IATF). Position 365 is a phosphoserine (S365). The next 3 helical transmembrane spans lie at 369 to 389 (MGKA…IPFA), 396 to 416 (VIPS…IGNV), and 436 to 456 (VLMF…FVNV). In terms of domain architecture, PTS EIIA type-2 spans 504-649 (DIISPELIEP…EEAYKLLEEI (146 aa)). H566 acts as the Tele-phosphohistidine intermediate; for EIIA activity in catalysis.

The protein resides in the cell membrane. The enzyme catalyses D-mannose(out) + N(pros)-phospho-L-histidyl-[protein] = D-mannose 6-phosphate(in) + L-histidyl-[protein]. In terms of biological role, the phosphoenolpyruvate-dependent sugar phosphotransferase system (sugar PTS), a major carbohydrate active -transport system, catalyzes the phosphorylation of incoming sugar substrates concomitantly with their translocation across the cell membrane. This system is involved in mannose transport. The chain is PTS system mannose-specific EIIBCA component (manP) from Bacillus subtilis (strain 168).